A 309-amino-acid chain; its full sequence is Anamorsin (309 aa).

The interval 6–172 (ISPGQLVAVF…KPNFEVGSSS (167 aa)) is N-terminal SAM-like domain. Positions 173–222 (QLKLPNKKSSSVKPVVDPAAAKLWTLSANDMEDDSVDLIDSDELLDPEDL) are linker. 3 positions are modified to phosphoserine: serine 182, serine 183, and serine 213. [2Fe-2S] cluster-binding residues include cysteine 235, cysteine 244, cysteine 247, and cysteine 249. Residues 235–249 (CGEGKKRKACKNCTC) form a fe-S binding site A region. Serine 269 is modified (phosphoserine). Residues cysteine 271, cysteine 274, cysteine 282, and cysteine 285 each contribute to the [4Fe-4S] cluster site. Short sequence motifs (cx2C motif) lie at residues 271 to 274 (CGNC) and 282 to 285 (CANC). A fe-S binding site B region spans residues 271–285 (CGNCYLGDAFRCANC). Phosphoserine is present on residues serine 302 and serine 304.

Belongs to the anamorsin family. Monomer. Interacts with NDOR1. Interacts with CHCHD4. [2Fe-2S] cluster serves as cofactor. [4Fe-4S] cluster is required as a cofactor.

The protein resides in the cytoplasm. The protein localises to the nucleus. Its subcellular location is the mitochondrion intermembrane space. In terms of biological role, component of the cytosolic iron-sulfur (Fe-S) protein assembly (CIA) machinery required for the maturation of extramitochondrial Fe-S proteins. Part of an electron transfer chain functioning in an early step of cytosolic Fe-S biogenesis, facilitating the de novo assembly of a [4Fe-4S] cluster on the scaffold complex NUBP1-NUBP2. Electrons are transferred to CIAPIN1 from NADPH via the FAD- and FMN-containing protein NDOR1. NDOR1-CIAPIN1 are also required for the assembly of the diferric tyrosyl radical cofactor of ribonucleotide reductase (RNR), probably by providing electrons for reduction during radical cofactor maturation in the catalytic small subunit. Has anti-apoptotic effects in the cell. Involved in negative control of cell death upon cytokine withdrawal. Promotes development of hematopoietic cells. This is Anamorsin from Mus musculus (Mouse).